The primary structure comprises 430 residues: Tol-Pal system protein TolB (430 aa).

An N-terminal signal peptide occupies residues M1 to A21.

The protein belongs to the TolB family. The Tol-Pal system is composed of five core proteins: the inner membrane proteins TolA, TolQ and TolR, the periplasmic protein TolB and the outer membrane protein Pal. They form a network linking the inner and outer membranes and the peptidoglycan layer.

Its subcellular location is the periplasm. Functionally, part of the Tol-Pal system, which plays a role in outer membrane invagination during cell division and is important for maintaining outer membrane integrity. The sequence is that of Tol-Pal system protein TolB from Syntrophotalea carbinolica (strain DSM 2380 / NBRC 103641 / GraBd1) (Pelobacter carbinolicus).